The chain runs to 64 residues: Large ribosomal subunit protein uL29 (64 aa).

Belongs to the universal ribosomal protein uL29 family.

The polypeptide is Large ribosomal subunit protein uL29 (Cupriavidus metallidurans (strain ATCC 43123 / DSM 2839 / NBRC 102507 / CH34) (Ralstonia metallidurans)).